The chain runs to 888 residues: MAGAAAESGRELWTFAGSRDPSAPRLAYGYGPGSLRELRAREFSRLAGTVYLDHAGATLFSQSQLESFTSDLMENTYGNPHSQNISSKLTHDTVEQVRYRILAHFHTTAEDYTVIFTAGSTAALKLVAEAFPWVSQGPESSGSRFCYLTDSHTSVVGMRNVTMAINVISTPVRPEDLWSAEERSASASNPDCQLPHLFCYPAQSNFSGVRYPLSWIEEVKSGRLHPVSTPGKWFVLLDAASYVSTSPLDLSAHQADFVPISFYKIFGFPTGLGALLVHNRAAPLLRKTYFGGGTASAYLAGEDFYIPRQSVAQRFEDGTISFLDVIALKHGFDTLERLTGGMENIKQHTFTLAQYTYVALSSLQYPNGAPVVRIYSDSEFSSPEVQGPIINFNVLDDKGNIIGYSQVDKMASLYNIHLRTGCFCNTGACQRHLGISNEMVRKHFQAGHVCGDNMDLIDGQPTGSVRISFGYMSTLDDVQAFLRFIIDTRLHSSGDWPVPQAHADTGETGAPSADSQADVIPAVMGRRSLSPQEDALTGSRVWNNSSTVNAVPVAPPVCDVARTQPTPSEKAAGVLEGALGPHVVTNLYLYPIKSCAAFEVTRWPVGNQGLLYDRSWMVVNHNGVCLSQKQEPRLCLIQPFIDLRQRIMVIKAKGMEPIEVPLEENSERTQIRQSRVCADRVSTYDCGEKISSWLSTFFGRPCHLIKQSSNSQRNAKKKHGKDQLPGTMATLSLVNEAQYLLINTSSILELHRQLNTSDENGKEELFSLKDLSLRFRANIIINGKRAFEEEKWDEISIGSLRFQVLGPCHRCQMICIDQQTGQRNQHVFQKLSESRETKVNFGMYLMHASLDLSSPCFLSVGSQVLPVLKENVEGHDLPASEKHQDVTS.

Ser34 carries the post-translational modification Phosphoserine. Lys264 bears the N6-(pyridoxal phosphate)lysine mark. Residue Cys424 is part of the active site. 2 positions are modified to phosphoserine: Ser528 and Ser530. The MOSC domain maps to 706–867 (KQSSNSQRNA…LSVGSQVLPV (162 aa)).

This sequence belongs to the class-V pyridoxal-phosphate-dependent aminotransferase family. MOCOS subfamily. Pyridoxal 5'-phosphate is required as a cofactor.

It catalyses the reaction Mo-molybdopterin + L-cysteine + AH2 = thio-Mo-molybdopterin + L-alanine + A + H2O. It functions in the pathway cofactor biosynthesis; molybdopterin biosynthesis. Its function is as follows. Sulfurates the molybdenum cofactor. Sulfation of molybdenum is essential for xanthine dehydrogenase (XDH) and aldehyde oxidase (ADO) enzymes in which molybdenum cofactor is liganded by 1 oxygen and 1 sulfur atom in active form. In vitro, the C-terminal domain is able to reduce N-hydroxylated prodrugs, such as benzamidoxime. The sequence is that of Molybdenum cofactor sulfurase from Homo sapiens (Human).